We begin with the raw amino-acid sequence, 221 residues long: uncharacterized protein (221 aa).

Over residues 1–11 (MGEKSRRKGPA) the composition is skewed to basic residues. Disordered stretches follow at residues 1–23 (MGEK…GRTC) and 139–169 (SNFQ…SAPE). Basic and acidic residues-rich tracts occupy residues 13–23 (RHADGKLGRTC) and 155–168 (DKRS…RSAP).

This is an uncharacterized protein from Homo sapiens (Human).